A 266-amino-acid chain; its full sequence is CAAX prenyl protease 2 (266 aa).

A run of 3 helical transmembrane segments spans residues 1–21 (MGAG…VHLF), 42–59 (LLSN…LRDY), and 78–98 (ITYP…MMQI). Catalysis depends on proton donor/acceptor residues Glu131 and His164. Transmembrane regions (helical) follow at residues 186–206 (GFQF…QLTT), 210–230 (IVPI…WLEI), and 239–259 (RLTL…LLYT).

This sequence belongs to the peptidase U48 family.

The protein resides in the endoplasmic reticulum membrane. It localises to the membrane. The enzyme catalyses Hydrolyzes the peptide bond -P2-(S-farnesyl or geranylgeranyl)C-P1'-P2'-P3'-COOH where P1' and P2' are amino acids with aliphatic sidechains and P3' is any C-terminal residue.. Its function is as follows. Protease involved in the processing of a variety of prenylated proteins containing the C-terminal CAAX motif, where C is a cysteine modified with an isoprenoid lipid, A is an aliphatic amino acid and X is any C-terminal amino acid. Proteolytically removes the C-terminal three residues of farnesylated and geranylated proteins, leaving the prenylated cysteine as the new C-terminus. This chain is CAAX prenyl protease 2, found in Caenorhabditis elegans.